A 184-amino-acid polypeptide reads, in one-letter code: GTP cyclohydrolase 1 (184 aa).

3 residues coordinate Zn(2+): cysteine 75, histidine 78, and cysteine 146.

It belongs to the GTP cyclohydrolase I family. In terms of assembly, toroid-shaped homodecamer, composed of two pentamers of five dimers.

It carries out the reaction GTP + H2O = 7,8-dihydroneopterin 3'-triphosphate + formate + H(+). The protein operates within cofactor biosynthesis; 7,8-dihydroneopterin triphosphate biosynthesis; 7,8-dihydroneopterin triphosphate from GTP: step 1/1. The sequence is that of GTP cyclohydrolase 1 from Pseudoalteromonas atlantica (strain T6c / ATCC BAA-1087).